The primary structure comprises 1291 residues: Period circadian protein homolog 1 (1291 aa).

The segment at 1 to 134 is disordered; it reads MSGPLEGADG…SSEQSARART (134 aa). The tract at residues 1-151 is interaction with BTRC; sequence MSGPLEGADG…LRELKLRLPP (151 aa). Over residues 48 to 115 the composition is skewed to low complexity; sequence NSNGSSGNES…AYSLLSASSE (68 aa). Over residues 116-132 the composition is skewed to polar residues; sequence QDNPSTSGCSSEQSARA. Threonine 121 bears the Phosphothreonine; by CSNK1E mark. 2 positions are modified to phosphoserine; by CSNK1E: serine 122 and serine 126. Positions 138–147 match the Nuclear export signal 1 motif; sequence LMTALRELKL. 2 consecutive PAS domains span residues 208–275 and 348–414; these read ITSE…PSRL and YEAP…KILQ. The PAC domain occupies 422 to 465; sequence HSPIRFCARNGEYVTMDTSWAGFVHPWSRKVAFVLGRHKVRTAP. A Nuclear export signal 2 motif is present at residues 489-498; the sequence is LSEQIHRLLL. 2 disordered regions span residues 508 to 544 and 647 to 698; these read GLCG…PAPV and TKRK…KEPV. Low complexity-rich tracts occupy residues 513-533 and 652-662; these read GPLM…SNGG and ASSSSYTASSA. Residues 596–815 form a required for phosphorylation by CSNK1E region; sequence ELEVAPVPDQ…GLDTSSVAPS (220 aa). Phosphoserine is present on residues serine 661, serine 663, and serine 704. Disordered stretches follow at residues 749–772, 809–873, and 938–1037; these read GLAP…TPDA, TSSV…PPAT, and SQAP…ALSG. The segment covering 751–769 has biased composition (pro residues); the sequence is APGPAPSPAPSPTVAPDPT. Serine 815 carries the phosphoserine modification. A Nuclear localization signal motif is present at residues 824–840; sequence IPPGRRHHCRSKAKRSR. Over residues 827 to 846 the composition is skewed to basic residues; it reads GRRHHCRSKAKRSRHHHHQT. Composition is skewed to pro residues over residues 859-873 and 955-965; these read SPVP…PPAT and PSLPPPPLSPP. Over residues 973–985 the composition is skewed to polar residues; sequence FNSRCSSPLQLNL. Phosphoserine occurs at positions 978 and 979. A Nuclear export signal 3 motif is present at residues 981-988; the sequence is LQLNLLQL. Positions 1042 to 1046 match the LXXLL motif; that stretch reads LELLL. Residues 1051–1061 show a composition bias toward low complexity; sequence RSGTGSAASGS. Disordered stretches follow at residues 1051 to 1099 and 1207 to 1291; these read RSGT…YFGS and SVQD…NSTS. Residues 1062–1076 show a composition bias toward gly residues; the sequence is LGSGLGSGSGSGSHE. Low complexity predominate over residues 1077–1094; it reads GGSTSASITRSSQSSHTS. The segment at 1148–1291 is CRY binding domain; it reads SRDAASVLKQ…ALPAEENSTS (144 aa). Over residues 1235-1248 the composition is skewed to gly residues; that stretch reads GEGGGCGVGGGGGD. A compositionally biased stretch (polar residues) spans 1253-1267; sequence AQTQIGAKGSSSQDS.

As to quaternary structure, homodimer. Component of the circadian core oscillator, which includes the CRY proteins, CLOCK or NPAS2, BMAL1 or BMAL2, CSNK1D and/or CSNK1E, TIMELESS, and the PER proteins. Interacts directly with TIMELESS. Interacts directly with PER2, PER3, CRY1 and CRY2. Interacts with BMAL1 and CLOCK. Interacts with GPRASP1. Interacts (phosphorylated) with BTRC and FBXW11; the interactions trigger proteasomal degradation. Interacts with NONO and SFPQ. Interacts with WDR5. Interacts with U2AF1L4 (Isoform 3). Interacts with USP2. Interacts with HNF4A. Post-translationally, phosphorylated on serine residues by CSNK1D, CSNK1E and probably also by CSNK1G2. Phosphorylation by CSNK1D or CSNK1E promotes nuclear location of PER proteins as well as ubiquitination and subsequent degradation. May be dephosphorylated by PP1. In terms of processing, ubiquitinated; requires phosphorylation by CSNK1E and interaction with BTRC and FBXW11. Deubiquitinated by USP2. In terms of tissue distribution, in brain, highest expression is observed in the SCN. Highly expressed in the pyramidal cell layer of the piriform cortex, the periventricular part of the caudate-putamen, many thalamic nuclei, and the granular layer of the cerebellar cortex. Weaker expression is detected in most area of the brain, including cortical and non cortical structures. Expression but no oscillations occurs in the glomerular and mitral cell layers of the olfactory bulb, the internal granular layer of the cerebellum, the cornu ammonis and dentate gyrus of the hippocampus, the cerebral and piriform cortices. Expressed in the renal cortex (at protein level). Also found in heart, brain, bladder, lumbar spinal cord, spleen, lung, liver, skeletal muscle and testis.

It localises to the nucleus. It is found in the cytoplasm. Transcriptional repressor which forms a core component of the circadian clock. The circadian clock, an internal time-keeping system, regulates various physiological processes through the generation of approximately 24 hour circadian rhythms in gene expression, which are translated into rhythms in metabolism and behavior. It is derived from the Latin roots 'circa' (about) and 'diem' (day) and acts as an important regulator of a wide array of physiological functions including metabolism, sleep, body temperature, blood pressure, endocrine, immune, cardiovascular, and renal function. Consists of two major components: the central clock, residing in the suprachiasmatic nucleus (SCN) of the brain, and the peripheral clocks that are present in nearly every tissue and organ system. Both the central and peripheral clocks can be reset by environmental cues, also known as Zeitgebers (German for 'timegivers'). The predominant Zeitgeber for the central clock is light, which is sensed by retina and signals directly to the SCN. The central clock entrains the peripheral clocks through neuronal and hormonal signals, body temperature and feeding-related cues, aligning all clocks with the external light/dark cycle. Circadian rhythms allow an organism to achieve temporal homeostasis with its environment at the molecular level by regulating gene expression to create a peak of protein expression once every 24 hours to control when a particular physiological process is most active with respect to the solar day. Transcription and translation of core clock components (CLOCK, NPAS2, BMAL1, BMAL2, PER1, PER2, PER3, CRY1 and CRY2) plays a critical role in rhythm generation, whereas delays imposed by post-translational modifications (PTMs) are important for determining the period (tau) of the rhythms (tau refers to the period of a rhythm and is the length, in time, of one complete cycle). A diurnal rhythm is synchronized with the day/night cycle, while the ultradian and infradian rhythms have a period shorter and longer than 24 hours, respectively. Disruptions in the circadian rhythms contribute to the pathology of cardiovascular diseases, cancer, metabolic syndromes and aging. A transcription/translation feedback loop (TTFL) forms the core of the molecular circadian clock mechanism. Transcription factors, CLOCK or NPAS2 and BMAL1 or BMAL2, form the positive limb of the feedback loop, act in the form of a heterodimer and activate the transcription of core clock genes and clock-controlled genes (involved in key metabolic processes), harboring E-box elements (5'-CACGTG-3') within their promoters. The core clock genes: PER1/2/3 and CRY1/2 which are transcriptional repressors form the negative limb of the feedback loop and interact with the CLOCK|NPAS2-BMAL1|BMAL2 heterodimer inhibiting its activity and thereby negatively regulating their own expression. This heterodimer also activates nuclear receptors NR1D1/2 and RORA/B/G, which form a second feedback loop and which activate and repress BMAL1 transcription, respectively. Regulates circadian target genes expression at post-transcriptional levels, but may not be required for the repression at transcriptional level. Controls PER2 protein decay. Represses CRY2 preventing its repression on CLOCK/BMAL1 target genes such as FXYD5 and SCNN1A in kidney and PPARA in liver. Besides its involvement in the maintenance of the circadian clock, has an important function in the regulation of several processes. Participates in the repression of glucocorticoid receptor NR3C1/GR-induced transcriptional activity by reducing the association of NR3C1/GR to glucocorticoid response elements (GREs) by BMAL1:CLOCK. Plays a role in the modulation of the neuroinflammatory state via the regulation of inflammatory mediators release, such as CCL2 and IL6. In spinal astrocytes, negatively regulates the MAPK14/p38 and MAPK8/JNK MAPK cascades as well as the subsequent activation of NFkappaB. Coordinately regulates the expression of multiple genes that are involved in the regulation of renal sodium reabsorption. Can act as gene expression activator in a gene and tissue specific manner, in kidney enhances WNK1 and SLC12A3 expression in collaboration with CLOCK. Modulates hair follicle cycling. Represses the CLOCK-BMAL1 induced transcription of BHLHE40/DEC1. The sequence is that of Period circadian protein homolog 1 (Per1) from Mus musculus (Mouse).